The following is a 351-amino-acid chain: Methylthioribose-1-phosphate isomerase (351 aa).

Substrate-binding positions include 53-55 (RGA), arginine 96, and glutamine 205. Residue aspartate 246 is the Proton donor of the active site. 256-257 (NK) is a substrate binding site.

The protein belongs to the eIF-2B alpha/beta/delta subunits family. MtnA subfamily.

It carries out the reaction 5-(methylsulfanyl)-alpha-D-ribose 1-phosphate = 5-(methylsulfanyl)-D-ribulose 1-phosphate. It participates in amino-acid biosynthesis; L-methionine biosynthesis via salvage pathway; L-methionine from S-methyl-5-thio-alpha-D-ribose 1-phosphate: step 1/6. In terms of biological role, catalyzes the interconversion of methylthioribose-1-phosphate (MTR-1-P) into methylthioribulose-1-phosphate (MTRu-1-P). The protein is Methylthioribose-1-phosphate isomerase of Synechocystis sp. (strain ATCC 27184 / PCC 6803 / Kazusa).